A 372-amino-acid polypeptide reads, in one-letter code: 4-hydroxy-3-methylbut-2-en-1-yl diphosphate synthase (flavodoxin) (372 aa).

Cysteine 270, cysteine 273, cysteine 305, and glutamate 312 together coordinate [4Fe-4S] cluster.

It belongs to the IspG family. The cofactor is [4Fe-4S] cluster.

The enzyme catalyses (2E)-4-hydroxy-3-methylbut-2-enyl diphosphate + oxidized [flavodoxin] + H2O + 2 H(+) = 2-C-methyl-D-erythritol 2,4-cyclic diphosphate + reduced [flavodoxin]. It participates in isoprenoid biosynthesis; isopentenyl diphosphate biosynthesis via DXP pathway; isopentenyl diphosphate from 1-deoxy-D-xylulose 5-phosphate: step 5/6. In terms of biological role, converts 2C-methyl-D-erythritol 2,4-cyclodiphosphate (ME-2,4cPP) into 1-hydroxy-2-methyl-2-(E)-butenyl 4-diphosphate. This Vibrio campbellii (strain ATCC BAA-1116) protein is 4-hydroxy-3-methylbut-2-en-1-yl diphosphate synthase (flavodoxin).